We begin with the raw amino-acid sequence, 313 residues long: Vacuolar membrane protein ZYRO0A01628g (313 aa).

Residues 22–37 (SASKTSSHTSKTSYSA) are compositionally biased toward low complexity. The interval 22-48 (SASKTSSHTSKTSYSAVVTPPSSDGNP) is disordered. The chain crosses the membrane as a helical span at residues 59 to 79 (GLIYIIVGGTAAAIFAFIILW). Residues 221–234 (TSLPSASESSSNLL) are compositionally biased toward low complexity. Residues 221-313 (TSLPSASESS…LLEGNDDGTT (93 aa)) form a disordered region. Residues 235-247 (DRPERTASPERKP) show a composition bias toward basic and acidic residues. Residues 248–257 (KAYGRYHQRN) show a composition bias toward basic residues. A compositionally biased stretch (polar residues) spans 285-301 (NVNNNNKKHGTTPSRFL).

This sequence belongs to the PRM5 family.

The protein localises to the vacuole membrane. This is Vacuolar membrane protein ZYRO0A01628g from Zygosaccharomyces rouxii (strain ATCC 2623 / CBS 732 / NBRC 1130 / NCYC 568 / NRRL Y-229).